The chain runs to 641 residues: 1-deoxy-D-xylulose-5-phosphate synthase (641 aa).

Residues H78 and 119–121 (AHS) contribute to the thiamine diphosphate site. D150 lines the Mg(2+) pocket. Residues 151–152 (GA), N179, Y288, and E370 contribute to the thiamine diphosphate site. A Mg(2+)-binding site is contributed by N179.

This sequence belongs to the transketolase family. DXPS subfamily. In terms of assembly, homodimer. It depends on Mg(2+) as a cofactor. Requires thiamine diphosphate as cofactor.

The enzyme catalyses D-glyceraldehyde 3-phosphate + pyruvate + H(+) = 1-deoxy-D-xylulose 5-phosphate + CO2. It participates in metabolic intermediate biosynthesis; 1-deoxy-D-xylulose 5-phosphate biosynthesis; 1-deoxy-D-xylulose 5-phosphate from D-glyceraldehyde 3-phosphate and pyruvate: step 1/1. Catalyzes the acyloin condensation reaction between C atoms 2 and 3 of pyruvate and glyceraldehyde 3-phosphate to yield 1-deoxy-D-xylulose-5-phosphate (DXP). This Azorhizobium caulinodans (strain ATCC 43989 / DSM 5975 / JCM 20966 / LMG 6465 / NBRC 14845 / NCIMB 13405 / ORS 571) protein is 1-deoxy-D-xylulose-5-phosphate synthase.